The primary structure comprises 155 residues: Ribosomal RNA large subunit methyltransferase H (155 aa).

S-adenosyl-L-methionine contacts are provided by residues Leu72, Gly103, and 122–127; that span reads LSPLTL.

The protein belongs to the RNA methyltransferase RlmH family. Homodimer.

The protein localises to the cytoplasm. It catalyses the reaction pseudouridine(1915) in 23S rRNA + S-adenosyl-L-methionine = N(3)-methylpseudouridine(1915) in 23S rRNA + S-adenosyl-L-homocysteine + H(+). Its function is as follows. Specifically methylates the pseudouridine at position 1915 (m3Psi1915) in 23S rRNA. In Pasteurella multocida (strain Pm70), this protein is Ribosomal RNA large subunit methyltransferase H.